Here is a 341-residue protein sequence, read N- to C-terminus: 4-hydroxy-2-oxovalerate aldolase (341 aa).

The region spanning 9 to 259 (VRITEVCLRD…KLDIDLYKMM (251 aa)) is the Pyruvate carboxyltransferase domain. Residue 17–18 (RD) coordinates substrate. Aspartate 18 contributes to the Mn(2+) binding site. The active-site Proton acceptor is the histidine 21. Residues serine 171 and histidine 198 each coordinate substrate. Positions 198 and 200 each coordinate Mn(2+). A substrate-binding site is contributed by tyrosine 289.

It belongs to the 4-hydroxy-2-oxovalerate aldolase family.

It catalyses the reaction (S)-4-hydroxy-2-oxopentanoate = acetaldehyde + pyruvate. The sequence is that of 4-hydroxy-2-oxovalerate aldolase from Bacillus cereus (strain ATCC 10987 / NRS 248).